A 485-amino-acid chain; its full sequence is UDP-N-acetylmuramoyl-L-alanyl-D-glutamate--2,6-diaminopimelate ligase (485 aa).

Residues Leu-27 and Ser-29 each coordinate UDP-N-acetyl-alpha-D-muramoyl-L-alanyl-D-glutamate. 106–112 (GTSGKTS) is a binding site for ATP. Residues 148-149 (TT), Ser-175, Gln-181, and Arg-183 each bind UDP-N-acetyl-alpha-D-muramoyl-L-alanyl-D-glutamate. Lys-215 carries the N6-carboxylysine modification. Residues Arg-382, 406 to 409 (DNPR), Gly-454, and Glu-458 contribute to the meso-2,6-diaminopimelate site. The Meso-diaminopimelate recognition motif motif lies at 406 to 409 (DNPR).

It belongs to the MurCDEF family. MurE subfamily. Mg(2+) is required as a cofactor. Post-translationally, carboxylation is probably crucial for Mg(2+) binding and, consequently, for the gamma-phosphate positioning of ATP.

The protein localises to the cytoplasm. The enzyme catalyses UDP-N-acetyl-alpha-D-muramoyl-L-alanyl-D-glutamate + meso-2,6-diaminopimelate + ATP = UDP-N-acetyl-alpha-D-muramoyl-L-alanyl-gamma-D-glutamyl-meso-2,6-diaminopimelate + ADP + phosphate + H(+). It participates in cell wall biogenesis; peptidoglycan biosynthesis. Its function is as follows. Catalyzes the addition of meso-diaminopimelic acid to the nucleotide precursor UDP-N-acetylmuramoyl-L-alanyl-D-glutamate (UMAG) in the biosynthesis of bacterial cell-wall peptidoglycan. This chain is UDP-N-acetylmuramoyl-L-alanyl-D-glutamate--2,6-diaminopimelate ligase, found in Bradyrhizobium diazoefficiens (strain JCM 10833 / BCRC 13528 / IAM 13628 / NBRC 14792 / USDA 110).